The sequence spans 385 residues: Na(+)/H(+) antiporter NhaA (385 aa).

11 helical membrane passes run 9–29 (YSAIFLLCSAALAIIFANVLD), 45–65 (IFGLITPHDIVADFLLAVFFF), 87–107 (IIPGVCAAGGILVPISIYLSV), 114–134 (GWPVPTATDVAFSLGILAIFG), 155–175 (AGIVIIATAFSVSISYWWIIV), 198–218 (TFLIIPAMLLCALAAWVSVYQ), 220–235 (GIHATIAGVMLGIMLN), 245–265 (ALEPYINGIILPAFAFLAAMV), 282–302 (ILLGLLFGKLLGISVFGIIAL), 312–332 (FFNLLVVSALGGIGFTVSLLM), and 345–365 (QGVIAVLIGSLLSAILAIILM).

This sequence belongs to the NhaA Na(+)/H(+) (TC 2.A.33) antiporter family.

It is found in the cell membrane. It carries out the reaction Na(+)(in) + 2 H(+)(out) = Na(+)(out) + 2 H(+)(in). Na(+)/H(+) antiporter that extrudes sodium in exchange for external protons. This chain is Na(+)/H(+) antiporter NhaA, found in Tropheryma whipplei (strain Twist) (Whipple's bacillus).